The primary structure comprises 338 residues: Glycerol-3-phosphate dehydrogenase [NAD(P)+] (338 aa).

NADPH-binding residues include S14, Y15, H35, and K109. 3 residues coordinate sn-glycerol 3-phosphate: K109, G138, and T140. A142 lines the NADPH pocket. Sn-glycerol 3-phosphate contacts are provided by K194, D247, S257, R258, and N259. The active-site Proton acceptor is K194. An NADPH-binding site is contributed by R258. NADPH-binding residues include V282 and E284.

The protein belongs to the NAD-dependent glycerol-3-phosphate dehydrogenase family.

Its subcellular location is the cytoplasm. It carries out the reaction sn-glycerol 3-phosphate + NAD(+) = dihydroxyacetone phosphate + NADH + H(+). It catalyses the reaction sn-glycerol 3-phosphate + NADP(+) = dihydroxyacetone phosphate + NADPH + H(+). It participates in membrane lipid metabolism; glycerophospholipid metabolism. Its function is as follows. Catalyzes the reduction of the glycolytic intermediate dihydroxyacetone phosphate (DHAP) to sn-glycerol 3-phosphate (G3P), the key precursor for phospholipid synthesis. This chain is Glycerol-3-phosphate dehydrogenase [NAD(P)+], found in Shewanella oneidensis (strain ATCC 700550 / JCM 31522 / CIP 106686 / LMG 19005 / NCIMB 14063 / MR-1).